The sequence spans 134 residues: Global transcriptional regulator Spx (134 aa).

A disulfide bridge links cysteine 10 with cysteine 13.

It belongs to the ArsC family. Spx subfamily. Interacts with the C-terminal domain of the alpha subunit of the RNAP.

The protein resides in the cytoplasm. In terms of biological role, global transcriptional regulator that plays a key role in stress response and exerts either positive or negative regulation of genes. Acts by interacting with the C-terminal domain of the alpha subunit of the RNA polymerase (RNAP). This interaction can enhance binding of RNAP to the promoter region of target genes and stimulate their transcription, or block interaction of RNAP with activator. This is Global transcriptional regulator Spx from Streptococcus pyogenes serotype M1.